The following is a 474-amino-acid chain: ATP synthase subunit beta (474 aa).

153 to 160 lines the ATP pocket; the sequence is GGAGVGKT.

It belongs to the ATPase alpha/beta chains family. As to quaternary structure, F-type ATPases have 2 components, CF(1) - the catalytic core - and CF(0) - the membrane proton channel. CF(1) has five subunits: alpha(3), beta(3), gamma(1), delta(1), epsilon(1). CF(0) has three main subunits: a(1), b(2) and c(9-12). The alpha and beta chains form an alternating ring which encloses part of the gamma chain. CF(1) is attached to CF(0) by a central stalk formed by the gamma and epsilon chains, while a peripheral stalk is formed by the delta and b chains.

The protein resides in the cell inner membrane. The enzyme catalyses ATP + H2O + 4 H(+)(in) = ADP + phosphate + 5 H(+)(out). Functionally, produces ATP from ADP in the presence of a proton gradient across the membrane. The catalytic sites are hosted primarily by the beta subunits. The protein is ATP synthase subunit beta of Rickettsia typhi (strain ATCC VR-144 / Wilmington).